Reading from the N-terminus, the 357-residue chain is Nicotinate-nucleotide--dimethylbenzimidazole phosphoribosyltransferase (357 aa).

Glu-323 serves as the catalytic Proton acceptor.

It belongs to the CobT family.

The catalysed reaction is 5,6-dimethylbenzimidazole + nicotinate beta-D-ribonucleotide = alpha-ribazole 5'-phosphate + nicotinate + H(+). It functions in the pathway nucleoside biosynthesis; alpha-ribazole biosynthesis; alpha-ribazole from 5,6-dimethylbenzimidazole: step 1/2. In terms of biological role, catalyzes the synthesis of alpha-ribazole-5'-phosphate from nicotinate mononucleotide (NAMN) and 5,6-dimethylbenzimidazole (DMB). The protein is Nicotinate-nucleotide--dimethylbenzimidazole phosphoribosyltransferase of Nitratidesulfovibrio vulgaris (strain DP4) (Desulfovibrio vulgaris).